We begin with the raw amino-acid sequence, 711 residues long: Receptor-like protein 43 (711 aa).

The first 30 residues, 1 to 30 (MKGFWNSKSTIRITLSFIFLFISQFSDVLA), serve as a signal peptide directing secretion. Residues 31–666 (APTRHLCRPE…EDEEVISWIA (636 aa)) lie on the Extracellular side of the membrane. N-linked (GlcNAc...) asparagine glycans are attached at residues N78, N114, N143, N167, and N191. LRR repeat units lie at residues 120–143 (LHFL…SIEN), 144–168 (LSHL…IGNL), 170–192 (HLTF…IGNL), 193–216 (SHLT…IGGL), 218–240 (HLTT…IGNL), 241–266 (SNLT…NLSQ), 268–288 (TRLD…LWTL), and 289–316 (PNLF…SMGH). N-linked (GlcNAc...) asparagine glycans are attached at residues N239, N242, N252, and N263. 5 N-linked (GlcNAc...) asparagine glycosylation sites follow: N295, N323, N347, N362, and N372. The stretch at 317–334 (LLGSNNNFTGKIPSFICE) is one LRR 9; degenerate repeat. 10 LRR repeats span residues 335–358 (LRSL…CMGN), 360–384 (KSNL…IFEI), 386–406 (RSLD…LRFF), 407–430 (STLE…LTSL), 431–452 (PKLQ…EASF), 453–476 (LKLR…YFVK), 519–543 (LTIY…IGLL), 544–567 (KELL…MGKL), 568–591 (TALE…IGNL), and 593–616 (FLSC…QFLT). The N-linked (GlcNAc...) asparagine glycan is linked to N420. An N-linked (GlcNAc...) asparagine glycan is attached at N466. N-linked (GlcNAc...) asparagine glycans are attached at residues N550, N590, and N598. The helical transmembrane segment at 667-687 (AAIGFIPGIVLGLTIGYILVF) threads the bilayer. Residues 688 to 711 (YKPEWFIKTFGRNNCRRRSTTTTH) lie on the Cytoplasmic side of the membrane.

Belongs to the RLP family.

It localises to the cell membrane. This is Receptor-like protein 43 from Arabidopsis thaliana (Mouse-ear cress).